The chain runs to 404 residues: Probable tRNA sulfurtransferase (404 aa).

Residues 60–165 (RSVIEALKPV…DEAAYLSHED (106 aa)) form the THUMP domain. ATP contacts are provided by residues 183–184 (ML), 208–209 (HF), Arg265, Gly287, and Gln296.

Belongs to the ThiI family.

The protein resides in the cytoplasm. It catalyses the reaction [ThiI sulfur-carrier protein]-S-sulfanyl-L-cysteine + a uridine in tRNA + 2 reduced [2Fe-2S]-[ferredoxin] + ATP + H(+) = [ThiI sulfur-carrier protein]-L-cysteine + a 4-thiouridine in tRNA + 2 oxidized [2Fe-2S]-[ferredoxin] + AMP + diphosphate. It carries out the reaction [ThiS sulfur-carrier protein]-C-terminal Gly-Gly-AMP + S-sulfanyl-L-cysteinyl-[cysteine desulfurase] + AH2 = [ThiS sulfur-carrier protein]-C-terminal-Gly-aminoethanethioate + L-cysteinyl-[cysteine desulfurase] + A + AMP + 2 H(+). It participates in cofactor biosynthesis; thiamine diphosphate biosynthesis. Its function is as follows. Catalyzes the ATP-dependent transfer of a sulfur to tRNA to produce 4-thiouridine in position 8 of tRNAs, which functions as a near-UV photosensor. Also catalyzes the transfer of sulfur to the sulfur carrier protein ThiS, forming ThiS-thiocarboxylate. This is a step in the synthesis of thiazole, in the thiamine biosynthesis pathway. The sulfur is donated as persulfide by IscS. This is Probable tRNA sulfurtransferase from Streptococcus equi subsp. equi (strain 4047).